Reading from the N-terminus, the 291-residue chain is Bis(5'-nucleosyl)-tetraphosphatase, symmetrical (291 aa).

It belongs to the Ap4A hydrolase family.

The catalysed reaction is P(1),P(4)-bis(5'-adenosyl) tetraphosphate + H2O = 2 ADP + 2 H(+). Functionally, hydrolyzes diadenosine 5',5'''-P1,P4-tetraphosphate to yield ADP. The polypeptide is Bis(5'-nucleosyl)-tetraphosphatase, symmetrical (Pseudomonas syringae pv. syringae (strain B728a)).